We begin with the raw amino-acid sequence, 285 residues long: Acetyl-coenzyme A carboxylase carboxyl transferase subunit beta (285 aa).

A CoA carboxyltransferase N-terminal domain is found at 22-285 (LWTKCEACGA…HPGVAYAPGV (264 aa)). 4 residues coordinate Zn(2+): Cys-26, Cys-29, Cys-45, and Cys-48. A C4-type zinc finger spans residues 26–48 (CEACGAQIYKKEFQENLHVCPKC).

This sequence belongs to the AccD/PCCB family. Acetyl-CoA carboxylase is a heterohexamer composed of biotin carboxyl carrier protein (AccB), biotin carboxylase (AccC) and two subunits each of ACCase subunit alpha (AccA) and ACCase subunit beta (AccD). Requires Zn(2+) as cofactor.

Its subcellular location is the cytoplasm. It carries out the reaction N(6)-carboxybiotinyl-L-lysyl-[protein] + acetyl-CoA = N(6)-biotinyl-L-lysyl-[protein] + malonyl-CoA. It functions in the pathway lipid metabolism; malonyl-CoA biosynthesis; malonyl-CoA from acetyl-CoA: step 1/1. Its function is as follows. Component of the acetyl coenzyme A carboxylase (ACC) complex. Biotin carboxylase (BC) catalyzes the carboxylation of biotin on its carrier protein (BCCP) and then the CO(2) group is transferred by the transcarboxylase to acetyl-CoA to form malonyl-CoA. This Thermus thermophilus (strain ATCC 27634 / DSM 579 / HB8) protein is Acetyl-coenzyme A carboxylase carboxyl transferase subunit beta.